A 365-amino-acid polypeptide reads, in one-letter code: L-lactate oxidase (365 aa).

Residues 6–365 (RIPPGVWNAI…ITHDTLTPSC (360 aa)) form the FMN hydroxy acid dehydrogenase domain. Tyr32 provides a ligand contact to pyruvate. Residues 85 to 87 (PVA), Ser114, and Gln135 contribute to the FMN site. Tyr137 contacts pyruvate. Residues Thr163, Lys237, and Ser259 each contribute to the FMN site. The pyruvate site is built by His261 and Arg264. Residue His261 is the Proton acceptor of the active site. FMN-binding positions include 292–296 (DGGVR) and Arg316.

Belongs to the FMN-dependent alpha-hydroxy acid dehydrogenase family. In terms of assembly, homotetramer. The cofactor is FMN.

The enzyme catalyses (S)-lactate + O2 = pyruvate + H2O2. It catalyses the reaction glycolate + O2 = glyoxylate + H2O2. Its function is as follows. Catalyzes the oxidation of (S)-lactate (L-lactate) to pyruvate, with a reduction of O2 to H2O2. To a lesser extent is also able to use glycolate as substrate. In Alicycliphilus denitrificans (strain DSM 14773 / CIP 107495 / K601), this protein is L-lactate oxidase.